The following is an 88-amino-acid chain: Small ribosomal subunit protein uS15 (88 aa).

This sequence belongs to the universal ribosomal protein uS15 family. In terms of assembly, part of the 30S ribosomal subunit. Forms a bridge to the 50S subunit in the 70S ribosome, contacting the 23S rRNA.

In terms of biological role, one of the primary rRNA binding proteins, it binds directly to 16S rRNA where it helps nucleate assembly of the platform of the 30S subunit by binding and bridging several RNA helices of the 16S rRNA. Forms an intersubunit bridge (bridge B4) with the 23S rRNA of the 50S subunit in the ribosome. The protein is Small ribosomal subunit protein uS15 of Trichlorobacter lovleyi (strain ATCC BAA-1151 / DSM 17278 / SZ) (Geobacter lovleyi).